A 1240-amino-acid polypeptide reads, in one-letter code: ABC transporter B family member 17 (1240 aa).

One can recognise an ABC transmembrane type-1 1 domain in the interval 35–324 (MALGLIGAVG…SLSNLKYFSE (290 aa)). Residues 36–56 (ALGLIGAVGDGFITPVVVFIF) traverse the membrane as a helical segment. A glycan (N-linked (GlcNAc...) asparagine) is linked at asparagine 70. Transmembrane regions (helical) follow at residues 81 to 101 (VVAL…EGYC), 158 to 180 (LPNF…ILMW), 184 to 206 (IVGF…ALVS), 264 to 284 (GITI…TWYG), and 296 to 316 (GTVF…GQSL). Positions 359-595 (VEFNHVKFTY…IDGQYTSLVS (237 aa)) constitute an ABC transporter 1 domain. 394-401 (GGSGSGKS) contacts ATP. Residues asparagine 542, asparagine 609, and asparagine 642 are each glycosylated (N-linked (GlcNAc...) asparagine). The ABC transmembrane type-1 2 domain occupies 672-960 (ALYGCLSAAL…AGTMTTDLAR (289 aa)). 2 helical membrane passes run 681-701 (LVGV…SVFF) and 714-734 (IYVL…ISQH). Asparagine 769 is a glycosylation site (N-linked (GlcNAc...) asparagine). 4 helical membrane passes run 793–815 (MSLL…VIAW), 817–839 (LAIV…RVLL), 896–919 (WLAG…NFWY), and 923–943 (LIAD…IFVT). Residues 995 to 1233 (ITFLNVDFAY…GPTGTYFSLA (239 aa)) form the ABC transporter 2 domain. Residue asparagine 1015 is glycosylated (N-linked (GlcNAc...) asparagine). 1030-1037 (GTSGSGKS) is a binding site for ATP.

This sequence belongs to the ABC transporter superfamily. ABCB family. Multidrug resistance exporter (TC 3.A.1.201) subfamily.

The protein localises to the membrane. This Arabidopsis thaliana (Mouse-ear cress) protein is ABC transporter B family member 17 (ABCB17).